A 658-amino-acid chain; its full sequence is MSYTVKVEEARPATEKMPSAGPVYRSIYARDGLLELPEGLQSPWEFLSGSVKRSPKTPMLGRRQIKDSEAGPYVWLTYQEVHDEAIRMASAMRSRGVNPGDRCGIYGTNCPQWIVAMQACYSHAITYVPLYDTLGPNAVEFIINHGEVSIAFVQENKISAILSCLPNCSSLLKTIVSFGNITSVQKKETEALGVSCFSWEEFSQLGNLSGELPEKHRTDICTLMYTSGATGEPKGVILTNEAIMAEILSTDNMLELTDKVFSEEDVYFSYLPLAHVYDQIVENYCIYKGSAIGYWRGDIRFLMDDLQELKPTIFCGVPRVYDRIYAGIFHKVSSGGTLKKMLFQYAYNYKMANMEKGLPHGQAAPLMDKLFFDKIKQGFGGRIRLMFSGAAPLPHHVEEYLRVTSCAALSQGYGLTESCGGCLTSIANIFPMIGTVGVPMTTIEARLESVPEMGYDALSDKPRGEICLRGTTLFSGYHKREDLTKDVLVDGWFHTGDIGEWQPNGAMKIIDRKKNIFKLSQGEYVPVENIEGIYLQCPLIASIWVYGNSFESFLVAVVVPERLALENWAANRNLTDDFKSLCENPKASKYILDELNSTAKKHQLRGFEMLKAVYLEPNPFDMERDLITPTFKLKRPQLLKYYKDHVDKLYSEAKEARV.

ATP contacts are provided by residues 226-234 (TSGATGEPK), 411-416 (QGYGLT), D497, 509-512 (IIDR), and K632. Positions 298–411 (DIRFLMDDLQ…RVTSCAALSQ (114 aa)) are SBD1. Residues 412-477 (GYGLTESCGG…LRGTTLFSGY (66 aa)) are SBD2.

The protein belongs to the ATP-dependent AMP-binding enzyme family. Mostly expressed in glandular trichomes (lupulin glands) after flowering, and, to a lower extent, in stems, leaves, cones and flowers.

It is found in the cytoplasm. The protein resides in the cytosol. In Humulus lupulus (European hop), this protein is Probable CoA ligase CCL6.